A 430-amino-acid chain; its full sequence is uncharacterized protein (430 aa).

This is an uncharacterized protein from Bos taurus (Bovine).